A 447-amino-acid chain; its full sequence is Putative vacuolar cation/proton exchanger 4 (447 aa).

The interval 1–29 (MDKSEMDKINGTNPESTDQAPSLASRPDE) is disordered. Topologically, residues 1–65 (MDKSEMDKIN…VNWGVFGSMK (65 aa)) are cytoplasmic. A compositionally biased stretch (polar residues) spans 10–22 (NGTNPESTDQAPS). The helical transmembrane segment at 66-86 (IVFLKSKLNVLIPCGFLAIFL) threads the bilayer. At 87–93 (NYMTQRY) the chain is on the extracellular side. A helical membrane pass occupies residues 94-114 (GWVFPLSMLGIIPLAERLGFA). Residues 115–122 (TDWQISCE) lie on the Cytoplasmic side of the membrane. A helical transmembrane segment spans residues 123-143 (VGRLLNSAFGNATELIISIHA). The segment at 132 to 167 (GNATELIISIHALSRGKLHVVQQCLLGSILSNLLLV) is cation selection. Over 144 to 159 (LSRGKLHVVQQCLLGS) the chain is Extracellular. Residues 160-180 (ILSNLLLVLGSAFFSGGLACG) traverse the membrane as a helical segment. The Cytoplasmic portion of the chain corresponds to 181–190 (KTMQTFSKAD). Residues 191-211 (AVVNSGLLLMAVMGLLIPAAL) form a helical membrane-spanning segment. Residues 212–224 (HYTHSEAQFGKSE) are Extracellular-facing. A helical transmembrane segment spans residues 225–245 (LALSRFSSCIMLVAYASYLYF). Residues 246–286 (QLSNNRRRNEANVYPCMPLIKRRIQDDVDGNDDEVPEISKR) lie on the Cytoplasmic side of the membrane. The helical transmembrane segment at 287–307 (EAISWIAIFIAWISMLSYYLV) threads the bilayer. At 308 to 318 (DAIDGASKAWN) the chain is on the extracellular side. A helical membrane pass occupies residues 319-339 (IPVAFISVVLLPVVGNSAGHA). The interval 333–368 (GNSAGHANAVMFAVKDKLDISLGVAIGSSIQISMFG) is cation selection. The Cytoplasmic segment spans residues 340–353 (NAVMFAVKDKLDIS). Residues 354–374 (LGVAIGSSIQISMFGIPFCVV) form a helical membrane-spanning segment. Residues 375–384 (MGWMMGKPMD) lie on the Extracellular side of the membrane. Residues 385-405 (LNFHLFETASLLTTVLVVAFL) form a helical membrane-spanning segment. Over 406–413 (LQDGTSNC) the chain is Cytoplasmic. A helical transmembrane segment spans residues 414–434 (VKGLMLFLCYLIVAASFYVHA). Residues 435–447 (DPNSKASEKPPQN) lie on the Extracellular side of the membrane.

The protein belongs to the Ca(2+):cation antiporter (CaCA) (TC 2.A.19) family. Cation/proton exchanger (CAX) subfamily.

It localises to the vacuole membrane. In terms of biological role, vacuolar cation/proton exchanger (CAX). Translocates Ca(2+) and other metal ions into vacuoles using the proton gradient formed by H(+)-ATPase and H(+)-pyrophosphatase. The polypeptide is Putative vacuolar cation/proton exchanger 4 (Oryza sativa subsp. japonica (Rice)).